The sequence spans 173 residues: MPRSQNKDNFLDKAFTKMAEGIVKVMPIDSKEKEAYLYYRKGLAAQNDGDYSEALEYYEESLKLEDNQVDRGETLKNMAIIYMSNGDEERALNTYKKALGQNPKQPSCLKNMGLIYEKRGRMAQRNGNQDECDIWFDQAAEVWSKAVRLYPGGYLDIENWLKTTGRGNVDVYL.

TPR repeat units follow at residues 35–68 (AYLYYRKGLAAQNDGDYSEALEYYEESLKLEDNQ), 72–105 (GETLKNMAIIYMSNGDEERALNTYKKALGQNPKQ), and 120–153 (GRMAQRNGNQDECDIWFDQAAEVWSKAVRLYPGG).

The protein belongs to the Ycf3 family.

Its subcellular location is the cellular thylakoid membrane. Functionally, essential for the assembly of the photosystem I (PSI) complex. May act as a chaperone-like factor to guide the assembly of the PSI subunits. The protein is Photosystem I assembly protein Ycf3 of Prochlorococcus marinus (strain NATL1A).